Consider the following 156-residue polypeptide: Small ribosomal subunit protein uS7 (156 aa).

The protein belongs to the universal ribosomal protein uS7 family. Part of the 30S ribosomal subunit. Contacts proteins S9 and S11.

In terms of biological role, one of the primary rRNA binding proteins, it binds directly to 16S rRNA where it nucleates assembly of the head domain of the 30S subunit. Is located at the subunit interface close to the decoding center, probably blocks exit of the E-site tRNA. The protein is Small ribosomal subunit protein uS7 of Rhizobium leguminosarum bv. trifolii (strain WSM2304).